Reading from the N-terminus, the 256-residue chain is Small ribosomal subunit protein eS1 (256 aa).

Ala2 is subject to N-acetylalanine; partial.

It belongs to the eukaryotic ribosomal protein eS1 family. In terms of assembly, component of the small ribosomal subunit. Mature ribosomes consist of a small (40S) and a large (60S) subunit. The 40S subunit contains about 33 different proteins and 1 molecule of RNA (18S). The 60S subunit contains about 49 different proteins and 3 molecules of RNA (25S, 5.8S and 5S).

Its subcellular location is the cytoplasm. This is Small ribosomal subunit protein eS1 from Lentinula edodes (Shiitake mushroom).